We begin with the raw amino-acid sequence, 413 residues long: Serine hydroxymethyltransferase (413 aa).

(6S)-5,6,7,8-tetrahydrofolate-binding positions include L119 and 123–125; that span reads GHL. Residue K228 is modified to N6-(pyridoxal phosphate)lysine.

Belongs to the SHMT family. As to quaternary structure, homodimer. The cofactor is pyridoxal 5'-phosphate.

Its subcellular location is the cytoplasm. The enzyme catalyses (6R)-5,10-methylene-5,6,7,8-tetrahydrofolate + glycine + H2O = (6S)-5,6,7,8-tetrahydrofolate + L-serine. The protein operates within one-carbon metabolism; tetrahydrofolate interconversion. It functions in the pathway amino-acid biosynthesis; glycine biosynthesis; glycine from L-serine: step 1/1. In terms of biological role, catalyzes the reversible interconversion of serine and glycine with tetrahydrofolate (THF) serving as the one-carbon carrier. This reaction serves as the major source of one-carbon groups required for the biosynthesis of purines, thymidylate, methionine, and other important biomolecules. Also exhibits THF-independent aldolase activity toward beta-hydroxyamino acids, producing glycine and aldehydes, via a retro-aldol mechanism. In Desulfatibacillum aliphaticivorans, this protein is Serine hydroxymethyltransferase.